Reading from the N-terminus, the 174-residue chain is ATP-dependent protease subunit HslV (174 aa).

The active site involves Thr2. Gly157, Cys160, and Thr163 together coordinate Na(+).

Belongs to the peptidase T1B family. HslV subfamily. A double ring-shaped homohexamer of HslV is capped on each side by a ring-shaped HslU homohexamer. The assembly of the HslU/HslV complex is dependent on binding of ATP.

Its subcellular location is the cytoplasm. It carries out the reaction ATP-dependent cleavage of peptide bonds with broad specificity.. Its activity is regulated as follows. Allosterically activated by HslU binding. Its function is as follows. Protease subunit of a proteasome-like degradation complex believed to be a general protein degrading machinery. The protein is ATP-dependent protease subunit HslV of Shewanella frigidimarina (strain NCIMB 400).